The chain runs to 313 residues: Acetaldehyde dehydrogenase 3 (313 aa).

Position 13–16 (Ser13–Ile16) interacts with NAD(+). Residue Cys133 is the Acyl-thioester intermediate of the active site. NAD(+)-binding positions include Ser164–Asn172 and Asn291.

It belongs to the acetaldehyde dehydrogenase family.

The enzyme catalyses acetaldehyde + NAD(+) + CoA = acetyl-CoA + NADH + H(+). The polypeptide is Acetaldehyde dehydrogenase 3 (Paraburkholderia xenovorans (strain LB400)).